Reading from the N-terminus, the 472-residue chain is Regulator of G-protein signaling 6 (472 aa).

Residues K40 to A115 enclose the DEP domain. Residues I261–V330 form the G protein gamma domain. The 106-residue stretch at S336–F441 folds into the RGS domain.

In terms of assembly, interacts with GNB5. Interacts with RGS7BP, leading to regulate the subcellular location of the heterodimer formed with GNB5. Interacts with GNAI1.

Its subcellular location is the cytoplasm. It is found in the cytosol. The protein localises to the membrane. It localises to the nucleus. The protein resides in the cell membrane. Its function is as follows. Regulates G protein-coupled receptor signaling cascades. Inhibits signal transduction by increasing the GTPase activity of G protein alpha subunits, thereby driving them into their inactive GDP-bound form. The RGS6/GNB5 dimer enhances GNAO1 GTPase activity. The polypeptide is Regulator of G-protein signaling 6 (RGS6) (Homo sapiens (Human)).